We begin with the raw amino-acid sequence, 84 residues long: MAQTQSPLQWLATTFIRGYQIFISPLLGPRCRFNPTCSHYAIEAIKVHGTAKGCWFALKRILKCHPLHPGGSDPVPPKNDRCNK.

It belongs to the UPF0161 family.

The protein localises to the cell inner membrane. Its function is as follows. Could be involved in insertion of integral membrane proteins into the membrane. The polypeptide is Putative membrane protein insertion efficiency factor (Shewanella sp. (strain ANA-3)).